The sequence spans 81 residues: Costars family protein ABRACL (81 aa).

Met-1 bears the N-acetylmethionine mark.

It belongs to the costars family.

The chain is Costars family protein ABRACL (ABRACL) from Homo sapiens (Human).